Here is a 149-residue protein sequence, read N- to C-terminus: Macrodomain Ter protein (149 aa).

It belongs to the MatP family. In terms of assembly, homodimer.

It is found in the cytoplasm. Its function is as follows. Required for spatial organization of the terminus region of the chromosome (Ter macrodomain) during the cell cycle. Prevents early segregation of duplicated Ter macrodomains during cell division. Binds specifically to matS, which is a 13 bp signature motif repeated within the Ter macrodomain. The polypeptide is Macrodomain Ter protein (Vibrio vulnificus (strain CMCP6)).